The chain runs to 273 residues: Large ribosomal subunit protein uL2 (273 aa).

Disordered regions lie at residues 30–50 and 221–273; these read YAPLLDTKSKTGGRNNFGRIT and RGTA…RRGK. A compositionally biased stretch (basic residues) spans 253 to 273; it reads KGKKTRHNKRTDKFIVRRRGK.

The protein belongs to the universal ribosomal protein uL2 family. Part of the 50S ribosomal subunit. Forms a bridge to the 30S subunit in the 70S ribosome.

Its function is as follows. One of the primary rRNA binding proteins. Required for association of the 30S and 50S subunits to form the 70S ribosome, for tRNA binding and peptide bond formation. It has been suggested to have peptidyltransferase activity; this is somewhat controversial. Makes several contacts with the 16S rRNA in the 70S ribosome. The protein is Large ribosomal subunit protein uL2 of Pasteurella multocida (strain Pm70).